The chain runs to 104 residues: ATP-dependent Clp protease adapter protein ClpS (104 aa).

This sequence belongs to the ClpS family. As to quaternary structure, binds to the N-terminal domain of the chaperone ClpA.

Functionally, involved in the modulation of the specificity of the ClpAP-mediated ATP-dependent protein degradation. In Burkholderia mallei (strain NCTC 10247), this protein is ATP-dependent Clp protease adapter protein ClpS.